Here is a 130-residue protein sequence, read N- to C-terminus: Lysozyme C (130 aa).

Residues 2–130 (KVYGRCELAA…VNVWIRGCRL (129 aa)) enclose the C-type lysozyme domain. 4 cysteine pairs are disulfide-bonded: cysteine 7–cysteine 128, cysteine 31–cysteine 116, cysteine 65–cysteine 81, and cysteine 77–cysteine 95. Catalysis depends on residues glutamate 36 and aspartate 53.

The protein belongs to the glycosyl hydrolase 22 family. In terms of assembly, monomer.

The protein resides in the secreted. It catalyses the reaction Hydrolysis of (1-&gt;4)-beta-linkages between N-acetylmuramic acid and N-acetyl-D-glucosamine residues in a peptidoglycan and between N-acetyl-D-glucosamine residues in chitodextrins.. Lysozymes have primarily a bacteriolytic function; those in tissues and body fluids are associated with the monocyte-macrophage system and enhance the activity of immunoagents. The polypeptide is Lysozyme C (LYZ) (Phasianus versicolor (Green pheasant)).